We begin with the raw amino-acid sequence, 854 residues long: Nucleolar MIF4G domain-containing protein 1 (854 aa).

The necessary for nucleolar localization and for targeting PPP1CA to the nucleolus stretch occupies residues 2–275 (PRNVPEVNGV…EEDPDWQVLQ (274 aa)). Ser60 bears the Phosphoserine mark. 2 disordered regions span residues 66–215 (ESRS…PLSF) and 231–333 (SGGG…GEKY). Basic residues predominate over residues 76 to 99 (PGGRKSRKELRKEKRHLRKARRLQ). Over residues 104-113 (SGSGDQGGNV) the composition is skewed to gly residues. A compositionally biased stretch (low complexity) spans 128–173 (VRPTPAKATATPAKASAPSTNTKASAAQPKAKAKGAPGKPGPATAT). Residues 188-197 (REIRKLERCL) show a composition bias toward basic and acidic residues. Acidic residues predominate over residues 265-280 (SEEDPDWQVLQEDQED). Basic and acidic residues-rich tracts occupy residues 281-291 (VNSKRRGEAES), 303-315 (RFAEVVEKSRSSS), and 322-331 (QESHSVESGE). Residues 301 to 304 (KVRF) carry the Required for efficient binding to PPP1CA and for targeting PPP1CA to the nucleolus motif. A phosphoserine mark is found at Ser311, Ser314, and Ser315. An MIF4G domain is found at 356–553 (KKHVKGLINR…ETMLALKNND (198 aa)). The MI domain occupies 648–764 (DVRRIIFCTL…PLSVLKVVEF (117 aa)).

It belongs to the CWC22 family. May interact with EIF4A1, EIF4A2 and EIF4A3. Interacts with PPP1CA and PPP1CC.

The protein resides in the nucleus. It localises to the nucleolus. Plays a role in targeting PPP1CA to the nucleolus. The sequence is that of Nucleolar MIF4G domain-containing protein 1 (Nom1) from Mus musculus (Mouse).